The following is a 669-amino-acid chain: DNA ligase (669 aa).

NAD(+) is bound at residue 35 to 39; that stretch reads DFEYD. The tract at residues 52–71 is disordered; the sequence is YPEWDSPDSPTHRVGSDKTE. Residues 61–71 show a composition bias toward basic and acidic residues; it reads PTHRVGSDKTE. Residues 84 to 85 and glutamate 115 each bind NAD(+); that span reads SL. Lysine 117 acts as the N6-AMP-lysine intermediate in catalysis. Positions 138, 175, 290, and 314 each coordinate NAD(+). Zn(2+) contacts are provided by cysteine 408, cysteine 411, cysteine 426, and cysteine 432. Residues 590–669 form the BRCT domain; that stretch reads AVSNRLAGKT…EEEFLRLIEE (80 aa).

This sequence belongs to the NAD-dependent DNA ligase family. LigA subfamily. Requires Mg(2+) as cofactor. Mn(2+) is required as a cofactor.

It carries out the reaction NAD(+) + (deoxyribonucleotide)n-3'-hydroxyl + 5'-phospho-(deoxyribonucleotide)m = (deoxyribonucleotide)n+m + AMP + beta-nicotinamide D-nucleotide.. DNA ligase that catalyzes the formation of phosphodiester linkages between 5'-phosphoryl and 3'-hydroxyl groups in double-stranded DNA using NAD as a coenzyme and as the energy source for the reaction. It is essential for DNA replication and repair of damaged DNA. The sequence is that of DNA ligase from Porphyromonas gingivalis (strain ATCC BAA-308 / W83).